Consider the following 65-residue polypeptide: Large ribosomal subunit protein bL35 (65 aa).

This sequence belongs to the bacterial ribosomal protein bL35 family.

The protein is Large ribosomal subunit protein bL35 of Thermotoga neapolitana (strain ATCC 49049 / DSM 4359 / NBRC 107923 / NS-E).